Here is a 517-residue protein sequence, read N- to C-terminus: NADH-quinone oxidoreductase subunit N (517 aa).

14 helical membrane-spanning segments follow: residues 14 to 34 (LAPT…EAFV), 40 to 60 (HMVQ…MVVV), 77 to 97 (GPAL…LLLI), 131 to 151 (ATEV…FVAA), 154 to 174 (LLTM…LCAL), 189 to 209 (YFLL…LVYG), 238 to 258 (VLLF…AAAA), 272 to 292 (PTPI…GALL), 306 to 326 (FTPI…VLAV), 334 to 354 (LLAY…LAPS), 362 to 382 (MFYL…VTLV), 404 to 424 (FYAG…LTSG), 451 to 471 (SMVL…SEPG), and 481 to 501 (GWLT…LGVV).

The protein belongs to the complex I subunit 2 family. NDH-1 is composed of 14 different subunits. Subunits NuoA, H, J, K, L, M, N constitute the membrane sector of the complex.

Its subcellular location is the cell membrane. It catalyses the reaction a quinone + NADH + 5 H(+)(in) = a quinol + NAD(+) + 4 H(+)(out). NDH-1 shuttles electrons from NADH, via FMN and iron-sulfur (Fe-S) centers, to quinones in the respiratory chain. The immediate electron acceptor for the enzyme in this species is believed to be a menaquinone. Couples the redox reaction to proton translocation (for every two electrons transferred, four hydrogen ions are translocated across the cytoplasmic membrane), and thus conserves the redox energy in a proton gradient. The sequence is that of NADH-quinone oxidoreductase subunit N from Salinispora arenicola (strain CNS-205).